The primary structure comprises 128 residues: Small ribosomal subunit protein uS14m (128 aa).

Belongs to the universal ribosomal protein uS14 family. Component of the mitochondrial ribosome small subunit (28S) which comprises a 12S rRNA and about 30 distinct proteins. Interacts with LIAT1.

The protein resides in the mitochondrion. In Mus musculus (Mouse), this protein is Small ribosomal subunit protein uS14m (Mrps14).